Here is a 20-residue protein sequence, read N- to C-terminus: Short cationic peptide-3a (20 aa).

At Glu-20 the chain carries Glutamic acid 1-amide.

Expressed by the venom gland.

The protein localises to the secreted. The sequence is that of Short cationic peptide-3a from Cupiennius salei (American wandering spider).